Reading from the N-terminus, the 111-residue chain is MENIKSIFYFLLAGVFEIGGGYLIWLWLRQGKSLIYGIIGALVLILYGIIPTLQPENSNFGRVYATYGGIFIVLSILCGWKVDNIIPDKFDLIGGFIALIGVLIIMYAPRG.

The next 4 membrane-spanning stretches (helical) occupy residues 7-27, 33-53, 60-80, and 85-105; these read IFYF…IWLW, SLIY…IPTL, FGRV…LCGW, and IIPD…VLII.

The protein belongs to the UPF0060 family.

The protein localises to the cell membrane. This is UPF0060 membrane protein CPR_1507 from Clostridium perfringens (strain SM101 / Type A).